Here is an 87-residue protein sequence, read N- to C-terminus: MALKEEFEEHAVKAKTLPESTSNENKLILYGLYKQSTVGPVDTGRPGMFSPRERAKWDAWKAVEGKSKEEAMGDYITKVKQLLEESA.

One can recognise an ACB domain in the interval 3-87 (LKEEFEEHAV…KVKQLLEESA (85 aa)). An acyl-CoA is bound by residues 30-34 (YGLYK), lysine 56, and tyrosine 75.

This sequence belongs to the ACBP family.

Functionally, binds medium- and long-chain acyl-CoA esters with very high affinity and may function as an intracellular carrier of acyl-CoA esters. In Fritillaria agrestis (Stinkbells), this protein is Acyl-CoA-binding protein (ACABP).